Consider the following 363-residue polypeptide: Cytoskeleton protein RodZ (363 aa).

Residues methionine 1 to glycine 111 lie on the Cytoplasmic side of the membrane. The HTH cro/C1-type domain occupies leucine 19–leucine 79. The H-T-H motif DNA-binding region spans glutamine 30–glutamate 49. A helical; Signal-anchor for type II membrane protein transmembrane segment spans residues tryptophan 112 to tryptophan 132. Over tryptophan 133–glutamate 363 the chain is Periplasmic. A disordered region spans residues serine 151–serine 277. Positions proline 188–asparagine 199 are enriched in polar residues. Residues serine 200–proline 225 are compositionally biased toward low complexity. Positions lysine 226–histidine 243 are enriched in polar residues. Residues alanine 247–glutamine 259 show a composition bias toward low complexity.

It belongs to the RodZ family.

It localises to the cell inner membrane. Cytoskeletal protein that is involved in cell-shape control through regulation of the length of the long axis. The protein is Cytoskeleton protein RodZ of Yersinia pseudotuberculosis serotype O:1b (strain IP 31758).